Reading from the N-terminus, the 343-residue chain is Inositol 2-dehydrogenase 1 (343 aa).

Belongs to the Gfo/Idh/MocA family. In terms of assembly, homotetramer.

It catalyses the reaction myo-inositol + NAD(+) = scyllo-inosose + NADH + H(+). Involved in the oxidation of myo-inositol (MI) to 2-keto-myo-inositol (2KMI or 2-inosose). The polypeptide is Inositol 2-dehydrogenase 1 (Mycolicibacterium vanbaalenii (strain DSM 7251 / JCM 13017 / BCRC 16820 / KCTC 9966 / NRRL B-24157 / PYR-1) (Mycobacterium vanbaalenii)).